The sequence spans 178 residues: MAIKIGITGPVGSIKAEALQKIIGMLQNDGLNVQGVLISKVSDDGKLTGYTIEDILTKKKVQFCDEKFVSRVKIDKLGVDTRLLEEILIPSLQKARESADVIIIDEVGKLENTTKKIHSEIEETLKCGKPLIVTLHKRSRNPVLQEIKSLEGVRVFDITPINKNILPFKVMHVLKGEE.

ATP-binding positions include 9-16 and 101-108; these read GPVGSIKA and VIIIDEVG.

The protein belongs to the THEP1 NTPase family.

The catalysed reaction is a ribonucleoside 5'-triphosphate + H2O = a ribonucleoside 5'-diphosphate + phosphate + H(+). Functionally, has nucleotide phosphatase activity towards ATP, GTP, CTP, TTP and UTP. May hydrolyze nucleoside diphosphates with lower efficiency. This is Nucleoside-triphosphatase THEP1 from Thermoplasma volcanium (strain ATCC 51530 / DSM 4299 / JCM 9571 / NBRC 15438 / GSS1).